A 556-amino-acid polypeptide reads, in one-letter code: 2-succinyl-5-enolpyruvyl-6-hydroxy-3-cyclohexene-1-carboxylate synthase (556 aa).

Belongs to the TPP enzyme family. MenD subfamily. In terms of assembly, homodimer. Requires Mg(2+) as cofactor. It depends on Mn(2+) as a cofactor. Thiamine diphosphate is required as a cofactor.

The enzyme catalyses isochorismate + 2-oxoglutarate + H(+) = 5-enolpyruvoyl-6-hydroxy-2-succinyl-cyclohex-3-ene-1-carboxylate + CO2. Its pathway is quinol/quinone metabolism; 1,4-dihydroxy-2-naphthoate biosynthesis; 1,4-dihydroxy-2-naphthoate from chorismate: step 2/7. It participates in quinol/quinone metabolism; menaquinone biosynthesis. Functionally, catalyzes the thiamine diphosphate-dependent decarboxylation of 2-oxoglutarate and the subsequent addition of the resulting succinic semialdehyde-thiamine pyrophosphate anion to isochorismate to yield 2-succinyl-5-enolpyruvyl-6-hydroxy-3-cyclohexene-1-carboxylate (SEPHCHC). This is 2-succinyl-5-enolpyruvyl-6-hydroxy-3-cyclohexene-1-carboxylate synthase from Shigella boydii serotype 4 (strain Sb227).